Reading from the N-terminus, the 1141-residue chain is Envelopment polyprotein (1141 aa).

The first 19 residues, 1-19 (MFCLCLSLLGLLLCWPAAT), serve as a signal peptide directing secretion. The Lumenal portion of the chain corresponds to 20–489 (RNLLELKVEC…CVPGLHGWAT (470 aa)). 6 cysteine pairs are disulfide-bonded: cysteine 29–cysteine 154, cysteine 63–cysteine 160, cysteine 112–cysteine 131, cysteine 136–cysteine 141, cysteine 178–cysteine 188, and cysteine 213–cysteine 252. Asparagine 137 carries an N-linked (GlcNAc...) asparagine; by host glycan. N-linked (GlcNAc...) asparagine; by host glycosylation occurs at asparagine 352. 4 disulfides stabilise this stretch: cysteine 381-cysteine 440, cysteine 385-cysteine 394, cysteine 410-cysteine 429, and cysteine 457-cysteine 480. Asparagine 404 is a glycosylation site (N-linked (GlcNAc...) asparagine; by host). Residues 490–510 (ISLLITFCFGWLAIPLLSMII) form a helical membrane-spanning segment. Topologically, residues 511–632 (IRFLLIFTYL…LSMFRYKSKC (122 aa)) are cytoplasmic. The binding to the ribonucleoprotein stretch occupies residues 521–538 (CSKYSTDSKFKLIIEKVK). 2 consecutive CCHC-type zinc fingers follow at residues 550 to 570 (CEVC…KKSC) and 575 to 596 (CPYC…FKVC). 3 binding to the ribonucleoprotein regions span residues 593–610 (FKVC…KKSL), 597–608 (KLTTRFQENLKK), and 616–630 (KRGL…RYKS). The segment at 612 to 653 (TYEPKRGLYRTLSMFRYKSKCYVGLVWCILLTMELIVWAASA) is inhibition of interferon induction. Positions 616–639 (KRGLYRTLSMFRYKSKCYVGLVWC) constitute an ITAM domain. Tyrosine 620 and tyrosine 633 each carry phosphotyrosine. The YxxL motif lies at 620-623 (YRTL). A helical membrane pass occupies residues 633–653 (YVGLVWCILLTMELIVWAASA). Residues 654-1109 (ETINLEPGWT…EWLLGILSGN (456 aa)) are Lumenal-facing. 8 cysteine pairs are disulfide-bonded: cysteine 740-cysteine 775, cysteine 744-cysteine 782, cysteine 756-cysteine 889, cysteine 770-cysteine 900, cysteine 785-cysteine 908, cysteine 811-cysteine 820, cysteine 828-cysteine 837, and cysteine 868-cysteine 872. The interval 762–782 (FEFETGWGCNPPDCPGVGTGC) is fusion loop. The N-linked (GlcNAc...) asparagine; by host glycan is linked to asparagine 932. Cystine bridges form between cysteine 974–cysteine 1004, cysteine 997–cysteine 1049, cysteine 1014–cysteine 1019, cysteine 1050–cysteine 1055, and cysteine 1089–cysteine 1093. Residues 1110-1130 (WMVVAVLIALFIFSLLLFSLC) traverse the membrane as a helical segment. Residues 1126–1141 (LFSLCCPRRQNYKKNK) form a binding to the ribonucleoprotein region. Residues 1131-1141 (CPRRQNYKKNK) lie on the Cytoplasmic side of the membrane.

Belongs to the hantavirus envelope glycoprotein family. As to quaternary structure, homodimer. Homotetramer; forms heterotetrameric Gn-Gc spikes in the pre-fusion conformation. Interacts (via C-terminus) with the nucleoprotein. Interacts with host TUFM; this interaction contributes to the virus-induced degradation of mitochondria by autophagy, which leads to degradation of host MAVS and inhibition of type I interferon (IFN) responses. Interacts with host MAP1LC3B; this interaction contributes to the virus-induced degradation of mitochondria by autophagy, which leads to degradation of host MAVS and inhibition of type I interferon (IFN) responses. In terms of assembly, homodimer. Homotetramer; forms heterotetrameric Gn-Gc spikes in the pre-fusion conformation. Homotrimer; forms homotrimer in the post-fusion conformation at acidic pH. Interacts (via C-terminus) with the nucleoprotein. Post-translationally, envelope polyprotein precursor is quickly cleaved in vivo just after synthesis, presumably by host signal peptidase.

Its subcellular location is the virion membrane. It localises to the host cell surface. The protein resides in the host Golgi apparatus membrane. The protein localises to the host endoplasmic reticulum membrane. It is found in the host mitochondrion. Its function is as follows. Forms homotetramers with glycoprotein C at the surface of the virion. Attaches the virion to host cell receptors including integrin alpha5/ITGB1. This attachment induces virion internalization predominantly through clathrin-dependent endocytosis. Mediates the assembly and budding of infectious virus particles through its interaction with the nucleocapsid protein and the viral genome. May dysregulate normal immune and endothelial cell responses through an ITAM motif. Translocates to mitochondria, binds to host TUFM and recruits MAP1LC3B. These interactions induce mitochondrial autophagy and therefore destruction of host MAVS leading to inhibition of type I interferon (IFN) responses. Concomitant breakdown of glycoprotein N is apparently prevented by the nucleoprotein that may inhibit Gn-stimulated autophagosome-lysosome fusion. Interacts with the viral genomic RNA. Inhibits the host RIG-I/TBK1 pathway by disrupting the formation of TBK1-TRAF3 complexes and downstream signaling responses required for IFN-beta transcription. Forms homotetramers with glycoprotein N at the surface of the virion. Attaches the virion to host cell receptors including integrin ITGAV/ITGB3. This attachment induces virion internalization predominantly through clathrin-dependent endocytosis. Class II fusion protein that promotes fusion of viral membrane with host endosomal membrane after endocytosis of the virion. This is Envelopment polyprotein (GP) from Tula orthohantavirus (TULV).